Here is a 306-residue protein sequence, read N- to C-terminus: Mycothiol acetyltransferase (306 aa).

N-acetyltransferase domains are found at residues 5–157 and 159–306; these read EIYE…EPAA and ITIR…HKKL. Residue glutamate 36 coordinates 1D-myo-inositol 2-(L-cysteinylamino)-2-deoxy-alpha-D-glucopyranoside. 82 to 84 contributes to the acetyl-CoA binding site; that stretch reads MLV. 1D-myo-inositol 2-(L-cysteinylamino)-2-deoxy-alpha-D-glucopyranoside contacts are provided by aspartate 186, lysine 227, and glutamate 238. 242 to 244 serves as a coordination point for acetyl-CoA; the sequence is LGV. Residue tyrosine 276 participates in 1D-myo-inositol 2-(L-cysteinylamino)-2-deoxy-alpha-D-glucopyranoside binding. An acetyl-CoA-binding site is contributed by 281–286; sequence NVRAVR.

The protein belongs to the acetyltransferase family. MshD subfamily. In terms of assembly, monomer.

The catalysed reaction is 1D-myo-inositol 2-(L-cysteinylamino)-2-deoxy-alpha-D-glucopyranoside + acetyl-CoA = mycothiol + CoA + H(+). Catalyzes the transfer of acetyl from acetyl-CoA to desacetylmycothiol (Cys-GlcN-Ins) to form mycothiol. This is Mycothiol acetyltransferase from Stackebrandtia nassauensis (strain DSM 44728 / CIP 108903 / NRRL B-16338 / NBRC 102104 / LLR-40K-21).